The chain runs to 236 residues: Ubiquinone biosynthesis O-methyltransferase (236 aa).

S-adenosyl-L-methionine is bound by residues Arg-39, Gly-59, Asp-80, and Met-124.

This sequence belongs to the methyltransferase superfamily. UbiG/COQ3 family.

The catalysed reaction is a 3-demethylubiquinol + S-adenosyl-L-methionine = a ubiquinol + S-adenosyl-L-homocysteine + H(+). It carries out the reaction a 3-(all-trans-polyprenyl)benzene-1,2-diol + S-adenosyl-L-methionine = a 2-methoxy-6-(all-trans-polyprenyl)phenol + S-adenosyl-L-homocysteine + H(+). The protein operates within cofactor biosynthesis; ubiquinone biosynthesis. O-methyltransferase that catalyzes the 2 O-methylation steps in the ubiquinone biosynthetic pathway. The protein is Ubiquinone biosynthesis O-methyltransferase of Shewanella oneidensis (strain ATCC 700550 / JCM 31522 / CIP 106686 / LMG 19005 / NCIMB 14063 / MR-1).